We begin with the raw amino-acid sequence, 350 residues long: Ornithine carbamoyltransferase, mitochondrial (350 aa).

The transit peptide at 1–30 directs the protein to the mitochondrion; that stretch reads MLHHMRTIINASWRYGNKCIVRQFGFSQTY. Residues 86-90, R137, and H164 each bind carbamoyl phosphate; that span reads STRTR. R137 provides a ligand contact to L-ornithine. L-ornithine is bound by residues N195, 259-263, 298-301, and R326; these read DTWVS and HCLP. C299 is a catalytic residue. Position 326 (R326) interacts with carbamoyl phosphate.

It belongs to the aspartate/ornithine carbamoyltransferase superfamily. OTCase family. In terms of assembly, homotrimer. Liver.

It localises to the mitochondrion matrix. It catalyses the reaction carbamoyl phosphate + L-ornithine = L-citrulline + phosphate + H(+). It participates in nitrogen metabolism; urea cycle; L-citrulline from L-ornithine and carbamoyl phosphate: step 1/1. Its function is as follows. OTC is necessary for the tadpoles transition from an ammonotelic, aquatic larva to a ureotelic, terrestrial adult. The protein is Ornithine carbamoyltransferase, mitochondrial of Aquarana catesbeiana (American bullfrog).